A 152-amino-acid polypeptide reads, in one-letter code: Calcium-binding protein SPEC 1A (152 aa).

EF-hand domains follow at residues 10–45, 46–81, 84–119, and 120–152; these read EEVT…TGKS, YTDK…QMVK, WKEE…SKPP, and MKRK…IKSC. Residues aspartate 23, aspartate 25, serine 27, serine 29, glutamate 34, aspartate 59, aspartate 61, serine 63, threonine 65, glutamate 70, aspartate 97, aspartate 99, asparagine 101, serine 103, glutamate 108, aspartate 133, asparagine 135, aspartate 137, lysine 139, and glutamate 144 each contribute to the Ca(2+) site. A disordered region spans residues 95-121; it reads DMDKDGNGSLSPQELREALSASKPPMK.

As to expression, found in cell lineages giving rise to the aboral ectoderm, a squamous epithelium covering the surface of the late stage embryo and larva.

Its function is as follows. Calcium-binding protein involved in larval development and metamorphosis. Likely to function as calcium buffers mediating the transport of calcium from the sea water to the blastocoel where calcium is required for skeleton formation. This Strongylocentrotus purpuratus (Purple sea urchin) protein is Calcium-binding protein SPEC 1A (SPEC1).